Consider the following 712-residue polypeptide: Autophagy-related protein 13 (712 aa).

Disordered regions lie at residues 388–443 (AGST…ETPP) and 568–611 (GSVG…DDDE). Low complexity predominate over residues 402-415 (SSVGSGSKYSSSFG). Residues 412 to 420 (SSFGRIRRH) form an ATG17-binding region. Residues 424–439 (RRSESIDRTAKPRKSN) are compositionally biased toward basic and acidic residues. The ATG1-binding stretch occupies residues 441 to 500 (TPPEDLLEFVKLLEDKKELNMKPSTILPQQDISSSLIKFQSMKPNNDTLSDNLSMSMSID). Residues 576–585 (TNEDSKEDED) show a composition bias toward acidic residues.

Belongs to the ATG13 family. Fungi subfamily. In terms of assembly, hypophosphorylated form interacts with ATG1 to form the ATG1-ATG13 kinase complex. The ATG1-ATG13 complex interacts with the ATG17-ATG29-ATG31 complex through direct interaction with ATG17. Interacts with VAC8. Hyperphosphorylated under nutrient-rich conditions. Starvation and TOR inactivation results in ATG13 partial dephosphorylation leading to ATG1-binding. Dephosphorylation induces ATG17-binding.

It is found in the cytoplasm. It localises to the preautophagosomal structure. Its function is as follows. Activates the ATG1 kinase in a nutritional condition dependent manner through the TOR pathway, leading to autophagy. Involved in ATG9 and ATG23 cycling through the pre-autophagosomal structure. Also involved in cytoplasm to vacuole transport (Cvt) and more specifically in Cvt vesicle formation. Seems to play a role in the switching machinery regulating the conversion between the Cvt pathway and autophagy. Finally, ATG13 is also required for glycogen storage during stationary phase. This Kluyveromyces marxianus (strain DMKU3-1042 / BCC 29191 / NBRC 104275) (Yeast) protein is Autophagy-related protein 13.